The primary structure comprises 529 residues: Probable E3 ubiquitin-protein ligase MGRN1 (529 aa).

The RING-type zinc finger occupies 275–314 (ECVVCLSDLRDTLILPCRHLCLCNACADTLRYQANNCPIC). 2 disordered regions span residues 341–362 (SPVLSQSSDHTEHSNADNIPPG) and 396–529 (EMGD…VEEC). 2 stretches are compositionally biased toward polar residues: residues 449–463 (AQPQSVLPCSLSPSE) and 477–487 (NSGSESRSLGV). Low complexity predominate over residues 501–511 (SSLSQSESDPS). Polar residues predominate over residues 520-529 (ESWSTAVEEC).

Post-translationally, autoubiquitinated in vitro.

It carries out the reaction S-ubiquitinyl-[E2 ubiquitin-conjugating enzyme]-L-cysteine + [acceptor protein]-L-lysine = [E2 ubiquitin-conjugating enzyme]-L-cysteine + N(6)-ubiquitinyl-[acceptor protein]-L-lysine.. It functions in the pathway protein modification; protein ubiquitination. In terms of biological role, E3 ubiquitin-protein ligase. Also acts as a negative regulator of hedgehog signaling. This Danio rerio (Zebrafish) protein is Probable E3 ubiquitin-protein ligase MGRN1 (mgrn1).